We begin with the raw amino-acid sequence, 515 residues long: Maturase K (515 aa).

The protein belongs to the intron maturase 2 family. MatK subfamily.

Its subcellular location is the plastid. The protein localises to the chloroplast. Its function is as follows. Usually encoded in the trnK tRNA gene intron. Probably assists in splicing its own and other chloroplast group II introns. This is Maturase K from Pinus armandii (Chinese white pine).